We begin with the raw amino-acid sequence, 367 residues long: Probable ATP-dependent RNA helicase MJ0669 (367 aa).

The Q motif motif lies at 6 to 34 (MNFNELNLSDNILNAIRNKGFEKPTDIQM). The Helicase ATP-binding domain occupies 38–206 (PLFLNDEYNI…KKYMGDYSFI (169 aa)). 51–58 (ARTGSGKT) serves as a coordination point for ATP. A DEAD box motif is present at residues 154 to 157 (DEAD). The region spanning 213 to 367 (NIEQSYVEVN…KLKIKKLKFG (155 aa)) is the Helicase C-terminal domain.

This sequence belongs to the DEAD box helicase family. In terms of assembly, homodimer.

The enzyme catalyses ATP + H2O = ADP + phosphate + H(+). The polypeptide is Probable ATP-dependent RNA helicase MJ0669 (Methanocaldococcus jannaschii (strain ATCC 43067 / DSM 2661 / JAL-1 / JCM 10045 / NBRC 100440) (Methanococcus jannaschii)).